The sequence spans 362 residues: Dihydroorotate dehydrogenase (quinone) (362 aa).

FMN is bound by residues 62-66 (AGYDK) and threonine 86. Position 66 (lysine 66) interacts with substrate. 111 to 115 (NRLGF) provides a ligand contact to substrate. 2 residues coordinate FMN: asparagine 139 and asparagine 170. Asparagine 170 is a binding site for substrate. The active-site Nucleophile is the serine 173. Asparagine 175 is a binding site for substrate. FMN contacts are provided by lysine 215 and serine 243. 244-245 (NT) lines the substrate pocket. FMN contacts are provided by residues glycine 266, glycine 295, and 316–317 (YS).

This sequence belongs to the dihydroorotate dehydrogenase family. Type 2 subfamily. As to quaternary structure, monomer. FMN serves as cofactor.

It localises to the cell membrane. It catalyses the reaction (S)-dihydroorotate + a quinone = orotate + a quinol. It participates in pyrimidine metabolism; UMP biosynthesis via de novo pathway; orotate from (S)-dihydroorotate (quinone route): step 1/1. Its function is as follows. Catalyzes the conversion of dihydroorotate to orotate with quinone as electron acceptor. In Rhizobium etli (strain CIAT 652), this protein is Dihydroorotate dehydrogenase (quinone).